The chain runs to 250 residues: Small ribosomal subunit protein uS2 (250 aa).

It belongs to the universal ribosomal protein uS2 family.

The polypeptide is Small ribosomal subunit protein uS2 (Paraburkholderia phytofirmans (strain DSM 17436 / LMG 22146 / PsJN) (Burkholderia phytofirmans)).